Consider the following 441-residue polypeptide: BTB/POZ domain-containing protein At4g30940 (441 aa).

The BTB domain occupies 6–74; that stretch reads DRIKFNVGGR…LRTGDLNIPP (69 aa).

It participates in protein modification; protein ubiquitination. Functionally, may act as a substrate-specific adapter of an E3 ubiquitin-protein ligase complex (CUL3-RBX1-BTB) which mediates the ubiquitination and subsequent proteasomal degradation of target proteins. The polypeptide is BTB/POZ domain-containing protein At4g30940 (Arabidopsis thaliana (Mouse-ear cress)).